The sequence spans 135 residues: MKKVGILNSEISKIVADMGHMDTLAVVDLGFPIPQGVKKVDLVVDRGKPGLMEVIEILLRELKVERIILAKEMDEKSIQTKQELLKLIEKMNGPVEVVTVPHKEFKEMSKNVKGIIRTGADIPYSNVILVGGVIF.

The active-site Proton donor is His-20. Substrate is bound by residues Asp-28, His-102, and 124-126; that span reads YSN.

It belongs to the RbsD / FucU family. RbsD subfamily. As to quaternary structure, homodecamer.

It localises to the cytoplasm. It carries out the reaction beta-D-ribopyranose = beta-D-ribofuranose. Its pathway is carbohydrate metabolism; D-ribose degradation; D-ribose 5-phosphate from beta-D-ribopyranose: step 1/2. In terms of biological role, catalyzes the interconversion of beta-pyran and beta-furan forms of D-ribose. The sequence is that of D-ribose pyranase from Thermotoga maritima (strain ATCC 43589 / DSM 3109 / JCM 10099 / NBRC 100826 / MSB8).